The sequence spans 315 residues: Biotin synthase (315 aa).

The region spanning 39-266 is the Radical SAM core domain; the sequence is NSLQFATLLS…KSAIRLTAGR (228 aa). Positions 54, 58, and 61 each coordinate [4Fe-4S] cluster. 4 residues coordinate [2Fe-2S] cluster: cysteine 98, cysteine 129, cysteine 189, and arginine 261.

Belongs to the radical SAM superfamily. Biotin synthase family. As to quaternary structure, homodimer. [4Fe-4S] cluster is required as a cofactor. [2Fe-2S] cluster serves as cofactor.

The catalysed reaction is (4R,5S)-dethiobiotin + (sulfur carrier)-SH + 2 reduced [2Fe-2S]-[ferredoxin] + 2 S-adenosyl-L-methionine = (sulfur carrier)-H + biotin + 2 5'-deoxyadenosine + 2 L-methionine + 2 oxidized [2Fe-2S]-[ferredoxin]. Its pathway is cofactor biosynthesis; biotin biosynthesis; biotin from 7,8-diaminononanoate: step 2/2. In terms of biological role, catalyzes the conversion of dethiobiotin (DTB) to biotin by the insertion of a sulfur atom into dethiobiotin via a radical-based mechanism. The polypeptide is Biotin synthase (Legionella pneumophila (strain Corby)).